Consider the following 226-residue polypeptide: ATP synthase subunit a (226 aa).

6 consecutive transmembrane segments (helical) span residues 17-37, 79-99, 105-125, 134-154, 176-196, and 199-219; these read FSYFFHIGLVALIAVIVAMMA, LVATLGIIVFFSNIIGIIPGF, SLNLTLSLAIIVFVYYHFEGI, FAHFMGPIKLLAPLMFPIEIV, LFLMVILALVPYIAPLPAYVL, and FMAFLQAFIFMILTYVYLAGA.

The protein belongs to the ATPase A chain family. F-type ATPases have 2 components, CF(1) - the catalytic core - and CF(0) - the membrane proton channel. CF(1) has five subunits: alpha(3), beta(3), gamma(1), delta(1), epsilon(1). CF(0) has three main subunits: a(1), b(2) and c(9-12). The alpha and beta chains form an alternating ring which encloses part of the gamma chain. CF(1) is attached to CF(0) by a central stalk formed by the gamma and epsilon chains, while a peripheral stalk is formed by the delta and b chains.

It localises to the cell inner membrane. Its function is as follows. Key component of the proton channel; it plays a direct role in the translocation of protons across the membrane. This chain is ATP synthase subunit a, found in Campylobacter jejuni subsp. jejuni serotype O:6 (strain 81116 / NCTC 11828).